Consider the following 636-residue polypeptide: Probable potassium transport system protein Kup (636 aa).

12 helical membrane-spanning segments follow: residues 22–42 (VGLL…SPLY), 64–84 (ILSL…VMFI), 115–135 (LMVI…MITP), 150–170 (FDGI…ALFL), 182–202 (LFGP…VHGI), 220–240 (FFVV…LALT), 261–281 (WFIL…ALLL), 293–313 (LLAP…ATVI), 351–371 (IYIG…VIGF), 383–403 (VAVT…MLLL), 408–428 (PLLA…FFAA), and 433–453 (IAQG…LMST).

The protein belongs to the HAK/KUP transporter (TC 2.A.72) family.

The protein resides in the cell inner membrane. The catalysed reaction is K(+)(in) + H(+)(in) = K(+)(out) + H(+)(out). Transport of potassium into the cell. Likely operates as a K(+):H(+) symporter. The sequence is that of Probable potassium transport system protein Kup from Pseudomonas putida (strain ATCC 47054 / DSM 6125 / CFBP 8728 / NCIMB 11950 / KT2440).